Consider the following 406-residue polypeptide: Cysteine desulfurase (406 aa).

K226 bears the N6-(pyridoxal phosphate)lysine mark. C364 functions as the Cysteine persulfide intermediate in the catalytic mechanism.

Belongs to the class-V pyridoxal-phosphate-dependent aminotransferase family. Csd subfamily. As to quaternary structure, homodimer. Interacts with SufE and the SufBCD complex composed of SufB, SufC and SufD. The interaction with SufE is required to mediate the direct transfer of the sulfur atom from the S-sulfanylcysteine. The cofactor is pyridoxal 5'-phosphate.

The protein localises to the cytoplasm. The enzyme catalyses (sulfur carrier)-H + L-cysteine = (sulfur carrier)-SH + L-alanine. The catalysed reaction is L-selenocysteine + AH2 = hydrogenselenide + L-alanine + A + H(+). The protein operates within cofactor biosynthesis; iron-sulfur cluster biosynthesis. Cysteine desulfurases mobilize the sulfur from L-cysteine to yield L-alanine, an essential step in sulfur metabolism for biosynthesis of a variety of sulfur-containing biomolecules. Component of the suf operon, which is activated and required under specific conditions such as oxidative stress and iron limitation. Acts as a potent selenocysteine lyase in vitro, that mobilizes selenium from L-selenocysteine. Selenocysteine lyase activity is however unsure in vivo. In Enterobacter sp. (strain 638), this protein is Cysteine desulfurase.